The sequence spans 177 residues: Dual-action ribosomal maturation protein DarP (177 aa).

The protein belongs to the DarP family.

Its subcellular location is the cytoplasm. In terms of biological role, member of a network of 50S ribosomal subunit biogenesis factors which assembles along the 30S-50S interface, preventing incorrect 23S rRNA structures from forming. Promotes peptidyl transferase center (PTC) maturation. The chain is Dual-action ribosomal maturation protein DarP from Glaesserella parasuis serovar 5 (strain SH0165) (Haemophilus parasuis).